The primary structure comprises 120 residues: LOB domain-containing protein 8 (120 aa).

The LOB domain maps to 8-109; that stretch reads RPCCVCITKN…AYLHELEEKI (102 aa).

The protein belongs to the LOB domain-containing protein family.

In Arabidopsis thaliana (Mouse-ear cress), this protein is LOB domain-containing protein 8 (LBD8).